Consider the following 216-residue polypeptide: Peptide methionine sulfoxide reductase MsrA (216 aa).

The active site involves Cys58.

The protein belongs to the MsrA Met sulfoxide reductase family.

The enzyme catalyses L-methionyl-[protein] + [thioredoxin]-disulfide + H2O = L-methionyl-(S)-S-oxide-[protein] + [thioredoxin]-dithiol. It catalyses the reaction [thioredoxin]-disulfide + L-methionine + H2O = L-methionine (S)-S-oxide + [thioredoxin]-dithiol. Functionally, has an important function as a repair enzyme for proteins that have been inactivated by oxidation. Catalyzes the reversible oxidation-reduction of methionine sulfoxide in proteins to methionine. The chain is Peptide methionine sulfoxide reductase MsrA from Azotobacter vinelandii (strain DJ / ATCC BAA-1303).